The sequence spans 355 residues: Tyrosine recombinase XerC (355 aa).

One can recognise a Core-binding (CB) domain in the interval 4-89; the sequence is TQFDGDIDSF…AVRGFFAWAY (86 aa). The tract at residues 137–181 is disordered; it reads KDDGGAAAAPGSGKAAGKTADKSADTVNRSEAPARADKRDNARVT. The span at 141-154 shows a compositional bias: low complexity; sequence GAAAAPGSGKAAGK. One can recognise a Tyr recombinase domain in the interval 158–349; that stretch reads KSADTVNRSE…SIEQLKNRYG (192 aa). Residues 168-178 are compositionally biased toward basic and acidic residues; it reads APARADKRDNA. Residues Arg200, Lys224, His301, Arg304, and His327 contribute to the active site. The active-site O-(3'-phospho-DNA)-tyrosine intermediate is the Tyr336.

It belongs to the 'phage' integrase family. XerC subfamily. As to quaternary structure, forms a cyclic heterotetrameric complex composed of two molecules of XerC and two molecules of XerD.

It localises to the cytoplasm. Functionally, site-specific tyrosine recombinase, which acts by catalyzing the cutting and rejoining of the recombining DNA molecules. The XerC-XerD complex is essential to convert dimers of the bacterial chromosome into monomers to permit their segregation at cell division. It also contributes to the segregational stability of plasmids. This is Tyrosine recombinase XerC from Bifidobacterium longum (strain DJO10A).